We begin with the raw amino-acid sequence, 290 residues long: Proteasome assembly chaperone 1 (290 aa).

The interval 1–39 (MAATFFGEVVKAPCRAGTEDEEEEEEEEGRRETPEDREV) is disordered. Ala-2 is subject to N-acetylalanine. At Thr-18 the chain carries Phosphothreonine. Basic and acidic residues predominate over residues 28–39 (EGRRETPEDREV). Thr-56 bears the Phosphothreonine mark. Ser-182 carries the phosphoserine modification. Lys-266 is modified (N6-acetyllysine).

It belongs to the PSMG1 family. As to quaternary structure, forms a heterodimer with PSMG2. The PSMG1-PSMG2 heterodimer interacts directly with the PSMA5 and PSMA7 proteasome alpha subunits. Degraded by the proteasome upon completion of 20S proteasome maturation.

It localises to the cytoplasm. The protein localises to the endoplasmic reticulum. Chaperone protein which promotes assembly of the 20S proteasome as part of a heterodimer with PSMG2. The PSMG1-PSMG2 heterodimer binds to the PSMA5 and PSMA7 proteasome subunits, promotes assembly of the proteasome alpha subunits into the heteroheptameric alpha ring and prevents alpha ring dimerization. The chain is Proteasome assembly chaperone 1 (PSMG1) from Papio anubis (Olive baboon).